Consider the following 548-residue polypeptide: MFS-rype transporter paaT (548 aa).

A compositionally biased stretch (basic and acidic residues) spans 1 to 10 (MEAPRSDQAH). The tract at residues 1-32 (MEAPRSDQAHTDATTPMEAIRTTSLGTNNYGP) is disordered. A compositionally biased stretch (polar residues) spans 21-30 (RTTSLGTNNY). Asparagine 70 and asparagine 93 each carry an N-linked (GlcNAc...) asparagine glycan. A run of 12 helical transmembrane segments spans residues 100 to 120 (WYCT…SSVI), 139 to 159 (LVVI…FAPM), 174 to 194 (ALAV…TLIV), 197 to 217 (LIDG…LADL), 224 to 244 (GVPM…GPLV), 256 to 276 (WLYW…TFTV), 332 to 352 (IVLF…MFFV), 370 to 390 (GLMF…APFV), 411 to 431 (LIPM…FAWT), 436 to 456 (LHWM…ILLY), 471 to 493 (AASA…VLFT), and 505 to 525 (ASTL…VFYF). Positions 258–269 (YWIQLILAFVAW) match the Peroxisomal targeting signal motif.

Belongs to the major facilitator superfamily. DHA1 family. Polyamines/proton antiporter (TC 2.A.1.2.16) subfamily.

The protein localises to the peroxisome membrane. Functionally, MFS-type transporter involved in penicillin production, most likely through the translocation of side-chain precursors (phenylacetic acid and phenoxyacetic acid) from the cytosol to the peroxisomal lumen across the peroxisomal membrane. The sequence is that of MFS-rype transporter paaT from Penicillium rubens (strain ATCC 28089 / DSM 1075 / NRRL 1951 / Wisconsin 54-1255) (Penicillium chrysogenum).